Reading from the N-terminus, the 142-residue chain is Large ribosomal subunit protein uL11 (142 aa).

Belongs to the universal ribosomal protein uL11 family. In terms of assembly, part of the ribosomal stalk of the 50S ribosomal subunit. Interacts with L10 and the large rRNA to form the base of the stalk. L10 forms an elongated spine to which L12 dimers bind in a sequential fashion forming a multimeric L10(L12)X complex. In terms of processing, one or more lysine residues are methylated.

Forms part of the ribosomal stalk which helps the ribosome interact with GTP-bound translation factors. The chain is Large ribosomal subunit protein uL11 from Afipia carboxidovorans (strain ATCC 49405 / DSM 1227 / KCTC 32145 / OM5) (Oligotropha carboxidovorans).